The sequence spans 132 residues: Interleukin-4 (132 aa).

An N-terminal signal peptide occupies residues 1-24; it reads MGLTSQLIPTLVCLLALTSTFVHG. 4 N-linked (GlcNAc...) asparagine glycosylation sites follow: N28, N45, N62, and N101. Intrachain disulfides connect C48/C84 and C70/C104.

The protein belongs to the IL-4/IL-13 family.

The protein resides in the secreted. Its function is as follows. Participates in at least several B-cell activation processes as well as of other cell types. It is a costimulator of DNA-synthesis. It induces the expression of class II MHC molecules on resting B-cells. It enhances both secretion and cell surface expression of IgE and IgG1. It also regulates the expression of the low affinity Fc receptor for IgE (CD23) on both lymphocytes and monocytes. Positively regulates IL31RA expression in macrophages. Stimulates autophagy in dendritic cells by interfering with mTORC1 signaling and through the induction of RUFY4. In Ailuropoda melanoleuca (Giant panda), this protein is Interleukin-4 (IL4).